Reading from the N-terminus, the 229-residue chain is 7-cyano-7-deazaguanine synthase (229 aa).

9–19 contributes to the ATP binding site; that stretch reads LSGGLDSATVL. Zn(2+) is bound by residues cysteine 188, cysteine 198, cysteine 201, and cysteine 204.

This sequence belongs to the QueC family. Requires Zn(2+) as cofactor.

It carries out the reaction 7-carboxy-7-deazaguanine + NH4(+) + ATP = 7-cyano-7-deazaguanine + ADP + phosphate + H2O + H(+). Its pathway is purine metabolism; 7-cyano-7-deazaguanine biosynthesis. Its function is as follows. Catalyzes the ATP-dependent conversion of 7-carboxy-7-deazaguanine (CDG) to 7-cyano-7-deazaguanine (preQ(0)). This is 7-cyano-7-deazaguanine synthase from Methylobacillus flagellatus (strain ATCC 51484 / DSM 6875 / VKM B-1610 / KT).